The primary structure comprises 89 residues: Small ribosomal subunit protein uS15 (89 aa).

Residues 1–24 form a disordered region; sequence MSLDTTEKQQLINSHQTHATDTGS. Residues 8–24 are compositionally biased toward polar residues; the sequence is KQQLINSHQTHATDTGS.

Belongs to the universal ribosomal protein uS15 family. In terms of assembly, part of the 30S ribosomal subunit. Forms a bridge to the 50S subunit in the 70S ribosome, contacting the 23S rRNA.

Functionally, one of the primary rRNA binding proteins, it binds directly to 16S rRNA where it helps nucleate assembly of the platform of the 30S subunit by binding and bridging several RNA helices of the 16S rRNA. Its function is as follows. Forms an intersubunit bridge (bridge B4) with the 23S rRNA of the 50S subunit in the ribosome. This is Small ribosomal subunit protein uS15 from Synechococcus sp. (strain CC9311).